A 301-amino-acid polypeptide reads, in one-letter code: 33 kDa chaperonin (301 aa).

Cystine bridges form between Cys-240-Cys-242 and Cys-273-Cys-276.

This sequence belongs to the HSP33 family. Post-translationally, under oxidizing conditions two disulfide bonds are formed involving the reactive cysteines. Under reducing conditions zinc is bound to the reactive cysteines and the protein is inactive.

Its subcellular location is the cytoplasm. Its function is as follows. Redox regulated molecular chaperone. Protects both thermally unfolding and oxidatively damaged proteins from irreversible aggregation. Plays an important role in the bacterial defense system toward oxidative stress. This is 33 kDa chaperonin from Rippkaea orientalis (strain PCC 8801 / RF-1) (Cyanothece sp. (strain PCC 8801)).